The sequence spans 179 residues: Probable inosine/xanthosine triphosphatase (179 aa).

Residue 13–18 coordinates substrate; it reads STNPVK. Mg(2+) is bound at residue glutamine 70.

The protein belongs to the YjjX NTPase family. In terms of assembly, homodimer. The cofactor is Mg(2+). Mn(2+) serves as cofactor.

It catalyses the reaction XTP + H2O = XDP + phosphate + H(+). The enzyme catalyses ITP + H2O = IDP + phosphate + H(+). Its function is as follows. Phosphatase that hydrolyzes non-canonical purine nucleotides such as XTP and ITP to their respective diphosphate derivatives. Probably excludes non-canonical purines from DNA/RNA precursor pool, thus preventing their incorporation into DNA/RNA and avoiding chromosomal lesions. The protein is Probable inosine/xanthosine triphosphatase of Methanocaldococcus jannaschii (strain ATCC 43067 / DSM 2661 / JAL-1 / JCM 10045 / NBRC 100440) (Methanococcus jannaschii).